We begin with the raw amino-acid sequence, 526 residues long: Light-independent protochlorophyllide reductase subunit B (526 aa).

Aspartate 36 serves as a coordination point for [4Fe-4S] cluster. Aspartate 290 functions as the Proton donor in the catalytic mechanism. 425 to 426 is a binding site for substrate; sequence GL.

It belongs to the ChlB/BchB/BchZ family. As to quaternary structure, protochlorophyllide reductase is composed of three subunits; ChlL, ChlN and ChlB. Forms a heterotetramer of two ChlB and two ChlN subunits. It depends on [4Fe-4S] cluster as a cofactor.

It catalyses the reaction chlorophyllide a + oxidized 2[4Fe-4S]-[ferredoxin] + 2 ADP + 2 phosphate = protochlorophyllide a + reduced 2[4Fe-4S]-[ferredoxin] + 2 ATP + 2 H2O. The protein operates within porphyrin-containing compound metabolism; chlorophyll biosynthesis (light-independent). Functionally, component of the dark-operative protochlorophyllide reductase (DPOR) that uses Mg-ATP and reduced ferredoxin to reduce ring D of protochlorophyllide (Pchlide) to form chlorophyllide a (Chlide). This reaction is light-independent. The NB-protein (ChlN-ChlB) is the catalytic component of the complex. This chain is Light-independent protochlorophyllide reductase subunit B, found in Prochlorococcus marinus subsp. pastoris (strain CCMP1986 / NIES-2087 / MED4).